Reading from the N-terminus, the 933-residue chain is Dual 3',5'-cyclic-AMP and -GMP phosphodiesterase 11A (933 aa).

A disordered region spans residues 42–121; the sequence is HTSGQGASSL…LQRRASQKEL (80 aa). Serine 162, serine 163, and serine 239 each carry phosphoserine. 2 GAF domains span residues 217–370 and 402–558; these read DLTS…GIAI and DLEK…GLGI. Serine 424 is a binding site for 3',5'-cyclic GMP. The PDEase domain maps to 588–912; it reads SKAEVDKFKA…RKWEELHQKR (325 aa). The active-site Proton donor is histidine 664. A divalent metal cation-binding residues include histidine 668, histidine 704, aspartate 705, and aspartate 816. The tract at residues 913–933 is disordered; it reads LQVSAASPDPASPMVAGEDRL.

Belongs to the cyclic nucleotide phosphodiesterase family. A divalent metal cation is required as a cofactor. As to expression, expressed in testis and developing spermatoza.

The protein resides in the cytoplasm. It localises to the cytosol. It carries out the reaction 3',5'-cyclic GMP + H2O = GMP + H(+). It catalyses the reaction 3',5'-cyclic AMP + H2O = AMP + H(+). With respect to regulation, inhibited by 3-isobutyl-1-methylxanthine (IBMX), zaprinast and dipyridamole. cGMP acts as an allosteric activator. Its function is as follows. Plays a role in signal transduction by regulating the intracellular concentration of cyclic nucleotides cAMP and cGMP. Catalyzes the hydrolysis of both cAMP and cGMP to 5'-AMP and 5'-GMP, respectively. The sequence is that of Dual 3',5'-cyclic-AMP and -GMP phosphodiesterase 11A (Pde11a) from Mus musculus (Mouse).